We begin with the raw amino-acid sequence, 468 residues long: Mannan endo-1,4-beta-mannosidase 3 (468 aa).

The signal sequence occupies residues methionine 1–alanine 23. Position 86 (tryptophan 86) interacts with substrate. Residue asparagine 152 is glycosylated (N-linked (GlcNAc...) asparagine). Residue asparagine 201 coordinates substrate. The active-site Proton donor is the glutamate 202. Substrate is bound at residue tyrosine 281. An N-linked (GlcNAc...) asparagine glycan is attached at asparagine 300. Glutamate 321 functions as the Nucleophile in the catalytic mechanism. Asparagine 333 is a glycosylation site (N-linked (GlcNAc...) asparagine). Residues tryptophan 364 and aspartate 371 each coordinate substrate. Residues leucine 415 to aspartate 436 are disordered. A compositionally biased stretch (basic residues) spans arginine 416–arginine 430.

It belongs to the glycosyl hydrolase 5 (cellulase A) family. As to expression, expressed in seeds.

The protein resides in the secreted. It carries out the reaction Random hydrolysis of (1-&gt;4)-beta-D-mannosidic linkages in mannans, galactomannans and glucomannans.. This chain is Mannan endo-1,4-beta-mannosidase 3 (MAN3), found in Oryza sativa subsp. japonica (Rice).